A 181-amino-acid polypeptide reads, in one-letter code: Ribonuclease HII (181 aa).

Residues M1–I181 enclose the RNase H type-2 domain. Residues D6, E7, and D98 each contribute to the a divalent metal cation site.

This sequence belongs to the RNase HII family. Requires Mn(2+) as cofactor. It depends on Mg(2+) as a cofactor.

The protein resides in the cytoplasm. It catalyses the reaction Endonucleolytic cleavage to 5'-phosphomonoester.. In terms of biological role, endonuclease that specifically degrades the RNA of RNA-DNA hybrids. The sequence is that of Ribonuclease HII (rnhB) from Borreliella burgdorferi (strain ATCC 35210 / DSM 4680 / CIP 102532 / B31) (Borrelia burgdorferi).